The chain runs to 205 residues: Ypt/Rab-type GTPase ypt7 (205 aa).

GTP-binding positions include 17–23 (SGVGKTS), 33–40 (FSASYKAT), G66, 125–128 (NKID), and 157–159 (SAK). The short motif at 37 to 45 (YKATIGADF) is the Effector region element. Residues C203 and C205 are each lipidated (S-geranylgeranyl cysteine). The residue at position 205 (C205) is a Cysteine methyl ester.

This sequence belongs to the small GTPase superfamily. Rab family. Interacts with the Rab GDP dissociation inhibitor GDI1.

The protein localises to the vacuole. Its activity is regulated as follows. Rab activation is generally mediated by a guanine exchange factor (GEF), while inactivation through hydrolysis of bound GTP is catalyzed by a GTPase activating protein (GAP). Ypt/Rab-type GTPases are key regulators of membrane trafficking and intracellular vesicular transport. They act as molecular switches that convert between GTP-bound and GDP-bound states, and regulate virtually all steps of membrane traffic from the formation of the transport vesicle at the donor membrane to its fusion at the target membrane. In the GDP-bound state, Ypt proteins are predominantly cytosolic, solubilized through the interaction with a GDP dissociation inhibitor (GDI). In the GTP-bound state, the proteins are membrane bound and interact with specific effector proteins that select cargo, promote vesicle movement, or verify the correct site of fusion. Required for fungal morphogenesis, vacuole fusion, autophagy, stress resistance and pathogenicity. The polypeptide is Ypt/Rab-type GTPase ypt7 (Pyricularia oryzae (strain 70-15 / ATCC MYA-4617 / FGSC 8958) (Rice blast fungus)).